The chain runs to 57 residues: Large ribosomal subunit protein eL20 (57 aa).

It belongs to the eukaryotic ribosomal protein eL20 family. In terms of assembly, part of the 50S ribosomal subunit. Binds 23S rRNA.

This Archaeoglobus fulgidus (strain ATCC 49558 / DSM 4304 / JCM 9628 / NBRC 100126 / VC-16) protein is Large ribosomal subunit protein eL20.